Reading from the N-terminus, the 311-residue chain is Methionyl-tRNA formyltransferase (311 aa).

110–113 (SLLP) is a binding site for (6S)-5,6,7,8-tetrahydrofolate.

Belongs to the Fmt family.

It carries out the reaction L-methionyl-tRNA(fMet) + (6R)-10-formyltetrahydrofolate = N-formyl-L-methionyl-tRNA(fMet) + (6S)-5,6,7,8-tetrahydrofolate + H(+). Its function is as follows. Attaches a formyl group to the free amino group of methionyl-tRNA(fMet). The formyl group appears to play a dual role in the initiator identity of N-formylmethionyl-tRNA by promoting its recognition by IF2 and preventing the misappropriation of this tRNA by the elongation apparatus. This Streptococcus agalactiae serotype Ia (strain ATCC 27591 / A909 / CDC SS700) protein is Methionyl-tRNA formyltransferase.